The following is a 216-amino-acid chain: Pyridoxine/pyridoxamine 5'-phosphate oxidase (216 aa).

Residues 9–12 (RLSY) and arginine 67 contribute to the substrate site. Residues 62-67 (RIVLLR), 77-78 (YT), lysine 84, and glutamine 106 each bind FMN. Substrate is bound by residues tyrosine 124, arginine 128, and serine 132. Residues 142–143 (QS) and tryptophan 188 each bind FMN. 194–196 (RMH) contacts substrate. Arginine 198 contributes to the FMN binding site.

The protein belongs to the pyridoxamine 5'-phosphate oxidase family. In terms of assembly, homodimer. FMN is required as a cofactor.

The catalysed reaction is pyridoxamine 5'-phosphate + O2 + H2O = pyridoxal 5'-phosphate + H2O2 + NH4(+). The enzyme catalyses pyridoxine 5'-phosphate + O2 = pyridoxal 5'-phosphate + H2O2. The protein operates within cofactor metabolism; pyridoxal 5'-phosphate salvage; pyridoxal 5'-phosphate from pyridoxamine 5'-phosphate: step 1/1. It participates in cofactor metabolism; pyridoxal 5'-phosphate salvage; pyridoxal 5'-phosphate from pyridoxine 5'-phosphate: step 1/1. Functionally, catalyzes the oxidation of either pyridoxine 5'-phosphate (PNP) or pyridoxamine 5'-phosphate (PMP) into pyridoxal 5'-phosphate (PLP). This Psychrobacter arcticus (strain DSM 17307 / VKM B-2377 / 273-4) protein is Pyridoxine/pyridoxamine 5'-phosphate oxidase.